A 130-amino-acid polypeptide reads, in one-letter code: Fluoride-specific ion channel FluC (130 aa).

Transmembrane regions (helical) follow at residues 1-21, 36-56, 65-85, and 103-123; these read MGEI…RYGL, GTLI…QWGF, LKLM…TFSY, and ILAN…LGSL. Na(+)-binding residues include Gly75 and Thr78.

This sequence belongs to the fluoride channel Fluc/FEX (TC 1.A.43) family.

It is found in the cell membrane. The catalysed reaction is fluoride(in) = fluoride(out). Its activity is regulated as follows. Na(+) is not transported, but it plays an essential structural role and its presence is essential for fluoride channel function. Its function is as follows. Fluoride-specific ion channel. Important for reducing fluoride concentration in the cell, thus reducing its toxicity. The protein is Fluoride-specific ion channel FluC of Dehalococcoides mccartyi (strain ATCC BAA-2266 / KCTC 15142 / 195) (Dehalococcoides ethenogenes (strain 195)).